Here is a 260-residue protein sequence, read N- to C-terminus: Glutamate racemase (260 aa).

Residues 14 to 15 and 46 to 47 each bind substrate; these read DS and YG. The Proton donor/acceptor role is filled by Cys77. 78 to 79 is a substrate binding site; sequence NT. Cys188 serves as the catalytic Proton donor/acceptor. 189–190 lines the substrate pocket; sequence TH.

It belongs to the aspartate/glutamate racemases family.

The enzyme catalyses L-glutamate = D-glutamate. It participates in cell wall biogenesis; peptidoglycan biosynthesis. Functionally, provides the (R)-glutamate required for cell wall biosynthesis. The sequence is that of Glutamate racemase from Clostridium perfringens (strain ATCC 13124 / DSM 756 / JCM 1290 / NCIMB 6125 / NCTC 8237 / Type A).